Here is a 268-residue protein sequence, read N- to C-terminus: 4-hydroxy-tetrahydrodipicolinate reductase (268 aa).

Residues 10–15 (GASGRM) and Asp36 contribute to the NAD(+) site. Arg37 provides a ligand contact to NADP(+). NAD(+) contacts are provided by residues 99–101 (GTT) and 123–126 (SANM). The active-site Proton donor/acceptor is the His156. His157 is a binding site for (S)-2,3,4,5-tetrahydrodipicolinate. Lys160 acts as the Proton donor in catalysis. 166–167 (GT) contributes to the (S)-2,3,4,5-tetrahydrodipicolinate binding site.

The protein belongs to the DapB family.

Its subcellular location is the cytoplasm. The catalysed reaction is (S)-2,3,4,5-tetrahydrodipicolinate + NAD(+) + H2O = (2S,4S)-4-hydroxy-2,3,4,5-tetrahydrodipicolinate + NADH + H(+). The enzyme catalyses (S)-2,3,4,5-tetrahydrodipicolinate + NADP(+) + H2O = (2S,4S)-4-hydroxy-2,3,4,5-tetrahydrodipicolinate + NADPH + H(+). Its pathway is amino-acid biosynthesis; L-lysine biosynthesis via DAP pathway; (S)-tetrahydrodipicolinate from L-aspartate: step 4/4. In terms of biological role, catalyzes the conversion of 4-hydroxy-tetrahydrodipicolinate (HTPA) to tetrahydrodipicolinate. This is 4-hydroxy-tetrahydrodipicolinate reductase from Burkholderia thailandensis (strain ATCC 700388 / DSM 13276 / CCUG 48851 / CIP 106301 / E264).